Here is a 520-residue protein sequence, read N- to C-terminus: Nucleobase-ascorbate transporter 1 (520 aa).

The next 12 helical transmembrane spans lie at 36–56 (YILM…AMGG), 64–84 (VIQT…LFGT), 86–106 (LPAV…IIND), 129–149 (ALIV…WGLF), 150–170 (SRFF…LGMF), 174–194 (FPQL…VIGL), 213–233 (FPIL…TASG), 279–299 (FAMM…YIAA), 362–382 (GFMI…SIPV), 384–404 (IYAA…LSFL), 415–435 (LMIT…FAQY), and 453–473 (AFLN…AVFM).

The protein belongs to the nucleobase:cation symporter-2 (NCS2) (TC 2.A.40) family. In terms of tissue distribution, expressed in cotyledons 4 days after imbibition (DAI). Expressed in the minor and major veins of cotyledons and leaves, in the shoot apex and pedicels. Expressed in the root meristems, root tips and lateral root primordia.

Its subcellular location is the membrane. The polypeptide is Nucleobase-ascorbate transporter 1 (NAT1) (Arabidopsis thaliana (Mouse-ear cress)).